Consider the following 158-residue polypeptide: Transcription elongation factor GreA (158 aa).

A coiled-coil region spans residues 49-73; sequence QAAREQQGFIEGRIKEIEAKLANAQ.

The protein belongs to the GreA/GreB family.

Functionally, necessary for efficient RNA polymerase transcription elongation past template-encoded arresting sites. The arresting sites in DNA have the property of trapping a certain fraction of elongating RNA polymerases that pass through, resulting in locked ternary complexes. Cleavage of the nascent transcript by cleavage factors such as GreA or GreB allows the resumption of elongation from the new 3'terminus. GreA releases sequences of 2 to 3 nucleotides. This chain is Transcription elongation factor GreA, found in Methylococcus capsulatus (strain ATCC 33009 / NCIMB 11132 / Bath).